Reading from the N-terminus, the 662-residue chain is UvrABC system protein B (662 aa).

Residues 25-182 (KGIEKGEKFQ…KKLVEIQYER (158 aa)) enclose the Helicase ATP-binding domain. Residue 38 to 45 (GVTGSGKT) coordinates ATP. Residues 91–114 (YYDYYQPEAYVAQSDTYIEKDASI) carry the Beta-hairpin motif. The Helicase C-terminal domain occupies 429-595 (QIDDLYTSIQ…TIIKDIREVI (167 aa)). In terms of domain architecture, UVR spans 622-657 (DKLIEKYEEEMREAAQNLQFEKAAHLRDVIYKLKRD).

Belongs to the UvrB family. In terms of assembly, forms a heterotetramer with UvrA during the search for lesions. Interacts with UvrC in an incision complex.

The protein localises to the cytoplasm. In terms of biological role, the UvrABC repair system catalyzes the recognition and processing of DNA lesions. A damage recognition complex composed of 2 UvrA and 2 UvrB subunits scans DNA for abnormalities. Upon binding of the UvrA(2)B(2) complex to a putative damaged site, the DNA wraps around one UvrB monomer. DNA wrap is dependent on ATP binding by UvrB and probably causes local melting of the DNA helix, facilitating insertion of UvrB beta-hairpin between the DNA strands. Then UvrB probes one DNA strand for the presence of a lesion. If a lesion is found the UvrA subunits dissociate and the UvrB-DNA preincision complex is formed. This complex is subsequently bound by UvrC and the second UvrB is released. If no lesion is found, the DNA wraps around the other UvrB subunit that will check the other stand for damage. The protein is UvrABC system protein B of Clostridium botulinum (strain 657 / Type Ba4).